Here is a 69-residue protein sequence, read N- to C-terminus: UPF0270 protein VCM66_2532 (69 aa).

This sequence belongs to the UPF0270 family.

The chain is UPF0270 protein VCM66_2532 from Vibrio cholerae serotype O1 (strain M66-2).